Here is a 345-residue protein sequence, read N- to C-terminus: Phosphoribosylformylglycinamidine cyclo-ligase (345 aa).

This sequence belongs to the AIR synthase family.

Its subcellular location is the cytoplasm. The catalysed reaction is 2-formamido-N(1)-(5-O-phospho-beta-D-ribosyl)acetamidine + ATP = 5-amino-1-(5-phospho-beta-D-ribosyl)imidazole + ADP + phosphate + H(+). Its pathway is purine metabolism; IMP biosynthesis via de novo pathway; 5-amino-1-(5-phospho-D-ribosyl)imidazole from N(2)-formyl-N(1)-(5-phospho-D-ribosyl)glycinamide: step 2/2. The sequence is that of Phosphoribosylformylglycinamidine cyclo-ligase from Escherichia coli (strain SE11).